A 337-amino-acid chain; its full sequence is 3-isopropylmalate dehydrogenase (337 aa).

Substrate contacts are provided by R86, R96, R117, and D201. Residues D201, D225, and D229 each contribute to the Mg(2+) site. 258 to 270 (GAAFDIAGKNIGN) serves as a coordination point for NAD(+).

Belongs to the isocitrate and isopropylmalate dehydrogenases family. In terms of assembly, homotetramer. The cofactor is Mg(2+). Requires Mn(2+) as cofactor.

Its subcellular location is the cytoplasm. The catalysed reaction is (2R,3S)-3-isopropylmalate + NAD(+) = 4-methyl-2-oxopentanoate + CO2 + NADH. It functions in the pathway amino-acid biosynthesis; L-leucine biosynthesis; L-leucine from 3-methyl-2-oxobutanoate: step 3/4. Functionally, catalyzes the oxidation of 3-carboxy-2-hydroxy-4-methylpentanoate (3-isopropylmalate) to 3-carboxy-4-methyl-2-oxopentanoate. The product decarboxylates to 4-methyl-2 oxopentanoate. This is 3-isopropylmalate dehydrogenase (leuB) from Sulfurisphaera tokodaii (strain DSM 16993 / JCM 10545 / NBRC 100140 / 7) (Sulfolobus tokodaii).